Reading from the N-terminus, the 293-residue chain is 5'-3' exoribonuclease Rnm (293 aa).

Positions 13, 15, 20, 45, 72, 83, 198, 255, and 257 each coordinate Mn(2+).

Belongs to the PHP family. TrpH/YciV subfamily. The cofactor is Mn(2+).

It carries out the reaction a ribonucleoside 3',5'-bisphosphate + H2O = a ribonucleoside 5'-phosphate + phosphate. In terms of biological role, exoribonuclease that catalyzes the last steps of 5S, 16S and 23S rRNA 5'-end maturation. Removes 3 nucleotides (nt) from the 5' end of 5S, 16S and 23S rRNA precursors to generate the mature 5' ends. Precursors with longer extensions are not processed (7 nt at the 5' end of pre-23S rRNA or 66 nt at the 5'-end of 16S rRNA are not processed). 5S and 23S rRNA maturation occurs more efficiently and accurately on ribosomal particles as compared to free RNA; the enzyme overdigests free RNA but generates the correct 5'-end in ribosomes from rnm deletion strains. Efficiently catalyzes the hydrolysis of the 3'-phosphate from 3',5'-bis-phosphonucleotides as well as the successive hydrolysis of 5'-phosphomononucleotides from the 5'-end of short pieces of RNA and DNA, with no specificity toward the identity of the nucleotide base. Is more efficient at hydrolyzing RNA oligonucleotides than DNA oligonucleotides. This enzyme can also hydrolyze annealed DNA duplexes, albeit at a catalytic efficiency approximately 10-fold lower than that of the corresponding single-stranded oligonucleotides. The chain is 5'-3' exoribonuclease Rnm from Escherichia coli (strain K12).